Consider the following 366-residue polypeptide: uncharacterized protein (366 aa).

The interval 199–267 (QKKQIEDEEK…QLKDAQAKRD (69 aa)) is disordered.

This is an uncharacterized protein from Haemophilus influenzae (strain ATCC 51907 / DSM 11121 / KW20 / Rd).